Consider the following 200-residue polypeptide: ATP-dependent Clp protease proteolytic subunit 2 (200 aa).

The Nucleophile role is filled by serine 100.

Belongs to the peptidase S14 family. As to quaternary structure, fourteen ClpP subunits assemble into 2 heptameric rings which stack back to back to give a disk-like structure with a central cavity, resembling the structure of eukaryotic proteasomes.

It localises to the cytoplasm. It catalyses the reaction Hydrolysis of proteins to small peptides in the presence of ATP and magnesium. alpha-casein is the usual test substrate. In the absence of ATP, only oligopeptides shorter than five residues are hydrolyzed (such as succinyl-Leu-Tyr-|-NHMec, and Leu-Tyr-Leu-|-Tyr-Trp, in which cleavage of the -Tyr-|-Leu- and -Tyr-|-Trp bonds also occurs).. In terms of biological role, cleaves peptides in various proteins in a process that requires ATP hydrolysis. Has a chymotrypsin-like activity. Plays a major role in the degradation of misfolded proteins. This chain is ATP-dependent Clp protease proteolytic subunit 2, found in Streptomyces avermitilis (strain ATCC 31267 / DSM 46492 / JCM 5070 / NBRC 14893 / NCIMB 12804 / NRRL 8165 / MA-4680).